A 91-amino-acid polypeptide reads, in one-letter code: Potassium channel toxin BmTXK-beta-2 (91 aa).

The signal sequence occupies residues 1 to 19; that stretch reads MQRNLVVLLFLGMVALSSC. The propeptide occupies 20 to 27; sequence GLREKHFQ. A BetaSPN-type CS-alpha/beta domain is found at 54-91; the sequence is QFGCPAYQGYCDDHCQDIKKEEGFCHGFKCKCGIPMGF. 3 cysteine pairs are disulfide-bonded: C57-C78, C64-C83, and C68-C85.

It belongs to the long chain scorpion toxin family. Class 1 subfamily. Expressed by the venom gland.

The protein resides in the secreted. Inhibits voltage-gated potassium channel. The sequence is that of Potassium channel toxin BmTXK-beta-2 from Olivierus martensii (Manchurian scorpion).